Reading from the N-terminus, the 1337-residue chain is GTPase activating protein homolog 3 (1337 aa).

Residues 14-264 (PESFADLWDG…LINSINNEDE (251 aa)) enclose the F-BAR domain. Disordered stretches follow at residues 279 to 328 (PKPF…LPIF) and 345 to 392 (ITNS…RFST). Over residues 293 to 302 (TPPPPPPPQI) the composition is skewed to pro residues. The segment covering 345 to 358 (ITNSLSLSSDSLQT) has biased composition (polar residues). A Rho-GAP domain is found at 422 to 611 (CKIEDIMVAQ…NIIEHFKPLQ (190 aa)). 3 disordered regions span residues 612–689 (VNDS…TTNT), 733–781 (VNNN…HTVA), and 794–821 (ITTP…SPSE). Composition is skewed to low complexity over residues 621–637 (SSSS…SIES), 645–687 (SSTN…SSTT), and 734–772 (NNNN…QQVS). The stretch at 830 to 859 (YLEDQERCKQRIDELHTQVNELYSDITTIE) forms a coiled coil. 2 disordered regions span residues 1041-1102 (SDPD…INNS) and 1114-1166 (KSAL…AHAI). The span at 1047-1063 (SPPTISNTTNRLLNTSG) shows a compositional bias: polar residues. Low complexity-rich tracts occupy residues 1064-1102 (STDF…INNS) and 1114-1159 (KSAL…TTTN). Positions 1189 to 1219 (LEINNKLHSQLTEELKKKQQQYKQLIFDIID) form a coiled coil.

It is found in the cytoplasm. The protein resides in the contractile vacuole. Functionally, rho GTPase-activating protein involved in the signal transduction pathway. The polypeptide is GTPase activating protein homolog 3 (mgp3) (Dictyostelium discoideum (Social amoeba)).